Consider the following 1018-residue polypeptide: Fibronectin-binding protein A (1018 aa).

The N-terminal stretch at 1–36 (MKNNLRYGIRKHKLGAASVFLGTMIVVGMGQDKEAA) is a signal peptide. The YSIRK-G/S signaling motif motif lies at 7–18 (YGIRKHKLGAAS). Residues 37 to 511 (ASEQKTTTVE…SNKANGNEKN (475 aa)) form a ligand-binding A region region. Disordered stretches follow at residues 38-61 (SEQKTTTVEENGNSATDNKTSETQ) and 78-195 (ATVT…ETGT). Polar residues-rich tracts occupy residues 39–61 (EQKTTTVEENGNSATDNKTSETQ) and 78–92 (ATVTEQPSNATQVTT). A compositionally biased stretch (basic and acidic residues) spans 112-126 (TVKEEVVKEEAKPQV). Residues 129-139 (TTQSQDNSGDQ) are compositionally biased toward polar residues. The interval 194–511 (GTDVTSKVTV…SNKANGNEKN (318 aa)) is fibrinogen/elastin/tropoelastin-binding. The tract at residues 512–872 (GPIIQNNKFE…EGQQTIEEDT (361 aa)) is fibronectin-binding. The stretch at 545–574 (EEYDSSTLDIDYHTAIDGGGGYVDGYIETI) is one B-1 repeat. A 2 X approximate tandem repeats region spans residues 545-604 (EEYDSSTLDIDYHTAIDGGGGYVDGYIETIEETDSSAIDIDYHTAVDSEAGHVGGYTESS). The stretch at 575–604 (EETDSSAIDIDYHTAVDSEAGHVGGYTESS) is one B-2 repeat. Disordered stretches follow at residues 595-622 (GHVGGYTESSEESNPIDFEESTHENSKH), 740-813 (LGYE…DIDF), and 827-997 (EIIE…GMLF). The D-1 repeat unit spans residues 745-782 (GQNSGNQSFEEDTEEDKPKYEQGGNIVDIDFDSVPQIH). Positions 745–878 (GQNSGNQSFE…EEDTTPPIVP (134 aa)) are 4 X approximate tandem repeats, D-3 repeat has more fibronectin-binding activity. The D-2 repeat unit spans residues 783 to 820 (GQNKGNQSFEEDTEKDKPKYEHGGNIIDIDFDSVPHIH). One copy of the D-3 repeat lies at 821–859 (GFNKHTEIIEEDTNKDKPSYQFGGHNSVDFEEDTLPKVS). Positions 827–838 (EIIEEDTNKDKP) are enriched in basic and acidic residues. Residues 860–878 (GQNEGQQTIEEDTTPPIVP) form a D-4; truncated repeat. Over residues 875-938 (PIVPPTPPTP…PAEPGKPVPP (64 aa)) the composition is skewed to pro residues. WR repeat units lie at residues 879 to 892 (PTPPTPEVPSEPET), 893 to 906 (PTPPTPEVPSEPET), 907 to 920 (PTPPTPEVPSEPET), 921 to 934 (PTPPTPEVPAEPGK), and 935 to 948 (PVPPAKEEPKKPSK). Positions 879–948 (PTPPTPEVPS…AKEEPKKPSK (70 aa)) are 5 X tandem repeats, Pro-rich (WR). An LPXTG sorting signal motif is present at residues 982–986 (LPETG). Residue threonine 985 is modified to Pentaglycyl murein peptidoglycan amidated threonine. The propeptide at 986–1018 (GGEESTNKGMLFGGLFSILGLALLRRNKKNHKA) is removed by sortase.

The protein resides in the secreted. Its subcellular location is the cell wall. Possesses multiple, substituting fibronectin (Fn) binding regions, each capable of conferring adherence to both soluble and immobilized forms of Fn. This confers to S.aureus the ability to invade endothelial cells both in vivo and in vitro, without requiring additional factors, although in a slow and inefficient way through actin rearrangements in host cells. This invasion process is mediated by integrin alpha-5/beta-1. Promotes bacterial attachment to both soluble and immobilized forms of fibrinogen (Fg) by means of a unique binding site localized within the 17 C-terminal residues of the gamma-chain of human Fg. Both plasma proteins (Fn and Fg) function as a bridge between bacterium and host cell. Promotes attachment to immobilized elastin peptides in a dose-dependent and saturable manner. Promotes attachment to both full-length and segments of immobilized human tropoelastin at multiple sites in a dose and pH-dependent manner. Promotes adherence to and aggregation of activated platelets independently of other S.aureus surface molecules. Is a critical mediator implicated in the induction of experimental endocarditis in rats with catheter-induced aortic vegetations, promoting both colonization and persistence of the bacterium into the host. In Staphylococcus aureus (strain NCTC 8325 / PS 47), this protein is Fibronectin-binding protein A (fnbA).